We begin with the raw amino-acid sequence, 62 residues long: U-stichotoxin-Hau1a (62 aa).

Positions 1–21 (MKPAIFLMLFVAMFLISEGEG) are cleaved as a signal peptide. Positions 22–31 (FKPKDAPQER) are excised as a propeptide. Position 36 is a hydroxyproline (P36). Intrachain disulfides connect C41–C53 and C44–C59.

The protein belongs to the Hau1a/HC18/HC19 family.

The protein resides in the secreted. It is found in the nematocyst. Toxin that is lethal to crab. Does not produce the typical symptoms associated with sodium channel toxins in crabs, suggesting that it likely does not act on sodium channels. This is U-stichotoxin-Hau1a from Heteractis aurora (Banded sea anemone).